The chain runs to 145 residues: MHPAHLLVLLGVYVSLLGAARIPPLPLNLIQFSNMIKCTIPGSQPLLDYANYGCYCGPGNNGTPVDDVDRCCQAHDECYDEASNHGCYPELTLYDYYCDTGVPYCKARTQCQVFVCGCDLAVAKCLAGATYNDENKNINTGERCQ.

Residues 1-19 form the signal peptide; the sequence is MHPAHLLVLLGVYVSLLGA. Positions 20-27 are excised as a propeptide; it reads ARIPPLPL. 7 disulfide bridges follow: Cys38/Cys98, Cys54/Cys144, Cys56/Cys72, Cys71/Cys125, Cys78/Cys118, Cys87/Cys111, and Cys105/Cys116.

The protein belongs to the phospholipase A2 family. Group I subfamily. D49 sub-subfamily. In terms of assembly, heterohexamer. 2 forms exist: 2 A or 2 B chains, 2 C chains and 2 covalently-linked D chains, and 1 A or 1 B, 1 C, 2 covalently-linked D chains and 2 differentially glycosylated covalently-linked D chains. Textilotoxin was originally described as pentameric. In terms of tissue distribution, expressed by the venom gland.

Its subcellular location is the secreted. Its function is as follows. Snake venom oligomeric phospholipase A2 that has potent presynaptic neurotoxicity. Chain C is not itself neurotoxic, but it is essential for the neurotoxicity of textilotoxin. Chain C possesses a very low phospholipase activity. This chain is Acidic phospholipase A2 homolog textilotoxin C chain, found in Pseudonaja textilis (Eastern brown snake).